The sequence spans 247 residues: Probable transcriptional regulatory protein YPK_2146 (247 aa).

This sequence belongs to the TACO1 family.

The protein resides in the cytoplasm. This is Probable transcriptional regulatory protein YPK_2146 from Yersinia pseudotuberculosis serotype O:3 (strain YPIII).